Consider the following 451-residue polypeptide: Methylenetetrahydrofolate--tRNA-(uracil-5-)-methyltransferase TrmFO (451 aa).

FAD is bound at residue 18–23 (GGGLAG).

It belongs to the MnmG family. TrmFO subfamily. The cofactor is FAD.

It localises to the cytoplasm. It carries out the reaction uridine(54) in tRNA + (6R)-5,10-methylene-5,6,7,8-tetrahydrofolate + NADH + H(+) = 5-methyluridine(54) in tRNA + (6S)-5,6,7,8-tetrahydrofolate + NAD(+). It catalyses the reaction uridine(54) in tRNA + (6R)-5,10-methylene-5,6,7,8-tetrahydrofolate + NADPH + H(+) = 5-methyluridine(54) in tRNA + (6S)-5,6,7,8-tetrahydrofolate + NADP(+). In terms of biological role, catalyzes the folate-dependent formation of 5-methyl-uridine at position 54 (M-5-U54) in all tRNAs. The chain is Methylenetetrahydrofolate--tRNA-(uracil-5-)-methyltransferase TrmFO from Synechococcus sp. (strain JA-3-3Ab) (Cyanobacteria bacterium Yellowstone A-Prime).